The following is a 259-amino-acid chain: Putative protein-tyrosine sulfotransferase (259 aa).

A disulfide bond links Cys-13 and Cys-68. Glu-16 acts as the Proton donor/acceptor in catalysis. Asn-36 carries N-linked (GlcNAc...) asparagine glycosylation. Positions 95, 103, and 107 each coordinate 3'-phosphoadenylyl sulfate. N-linked (GlcNAc...) asparagine glycosylation is present at Asn-115. Cys-137 and Cys-144 are oxidised to a cystine. 3'-phosphoadenylyl sulfate is bound by residues Tyr-149 and Ser-194–Asn-203.

Belongs to the protein sulfotransferase family.

The enzyme catalyses L-tyrosyl-[protein] + 3'-phosphoadenylyl sulfate = O-sulfo-L-tyrosine-[protein] + adenosine 3',5'-bisphosphate + H(+). In terms of biological role, catalyzes the O-sulfation of tyrosine residues within acidic motifs of polypeptides, using 3'-phosphoadenylyl sulfate (PAPS) as cosubstrate. The sequence is that of Putative protein-tyrosine sulfotransferase (tpst-2) from Caenorhabditis elegans.